The sequence spans 162 residues: UPF0114 protein Sputw3181_3501 (162 aa).

Transmembrane regions (helical) follow at residues 15–35, 53–73, and 136–156; these read IMAP…IKFF, LVLV…IVMV, and IMWY…MGYL.

It belongs to the UPF0114 family.

The protein resides in the cell membrane. This Shewanella sp. (strain W3-18-1) protein is UPF0114 protein Sputw3181_3501.